A 52-amino-acid chain; its full sequence is Keratin-associated protein 19-2 (52 aa).

This sequence belongs to the KRTAP type 19 family. As to quaternary structure, interacts with hair keratins.

In terms of biological role, in the hair cortex, hair keratin intermediate filaments are embedded in an interfilamentous matrix, consisting of hair keratin-associated proteins (KRTAP), which are essential for the formation of a rigid and resistant hair shaft through their extensive disulfide bond cross-linking with abundant cysteine residues of hair keratins. The matrix proteins include the high-sulfur and high-glycine-tyrosine keratins. This is Keratin-associated protein 19-2 (KRTAP19-2) from Homo sapiens (Human).